The primary structure comprises 621 residues: Type 2 DNA topoisomerase 6 subunit B (621 aa).

ATP-binding positions include asparagine 48, aspartate 80, 101 to 102 (SR), 111 to 118 (GQQGIGIS), and lysine 435.

Belongs to the TOP6B family. In terms of assembly, homodimer. Heterotetramer of two Top6A and two Top6B chains.

The enzyme catalyses ATP-dependent breakage, passage and rejoining of double-stranded DNA.. Functionally, relaxes both positive and negative superturns and exhibits a strong decatenase activity. This chain is Type 2 DNA topoisomerase 6 subunit B, found in Methanosarcina acetivorans (strain ATCC 35395 / DSM 2834 / JCM 12185 / C2A).